Here is a 167-residue protein sequence, read N- to C-terminus: Transcription factor HES-5 (167 aa).

Residues 16 to 72 (KNRLRKPVVEKMRRDRINSSIEQLKLLLEQEFARHQPNSKLEKADILEMAVSYLKHS) form the bHLH domain. Residues 88 to 119 (YSEGYSWCLQEAVQFLTLHAASDTQMKLLYHF) enclose the Orange domain. Residues 124–138 (APAAPAKEPPAPGAA) are compositionally biased toward pro residues. The tract at residues 124-167 (APAAPAKEPPAPGAAPQPARSSAKAAAAAVSTSRQPACGLWRPW) is disordered. Over residues 139-160 (PQPARSSAKAAAAAVSTSRQPA) the composition is skewed to low complexity. Residues 164 to 167 (WRPW) carry the WRPW motif motif.

In terms of assembly, transcription repression requires formation of a complex with a corepressor protein of the Groucho/TLE family.

The protein resides in the nucleus. Its function is as follows. Transcriptional repressor of genes that require a bHLH protein for their transcription. Plays an important role as neurogenesis negative regulator. The polypeptide is Transcription factor HES-5 (Hes5) (Mus musculus (Mouse)).